We begin with the raw amino-acid sequence, 33 residues long: Photosystem II reaction center protein Psb30 (33 aa).

Residues 5-25 (IVAQLTVLALIVVSGPLVIAL) form a helical membrane-spanning segment.

Belongs to the Psb30/Ycf12 family. As to quaternary structure, PSII is composed of 1 copy each of membrane proteins PsbA, PsbB, PsbC, PsbD, PsbE, PsbF, PsbH, PsbI, PsbJ, PsbK, PsbL, PsbM, PsbT, PsbX, PsbY, PsbZ, Psb30/Ycf12, peripheral proteins of the oxygen-evolving complex and a large number of cofactors. It forms dimeric complexes.

The protein localises to the plastid. Its subcellular location is the chloroplast thylakoid membrane. Its function is as follows. A core subunit of photosystem II (PSII), probably helps stabilize the reaction center. The chain is Photosystem II reaction center protein Psb30 from Angiopteris evecta (Mule's foot fern).